Reading from the N-terminus, the 467-residue chain is Iroquois-class homeodomain protein irx-1-A (467 aa).

Residues 126–188 (DPGRPKNATR…NARRRLKKEN (63 aa)) constitute a DNA-binding region (homeobox; TALE-type). Disordered stretches follow at residues 197-306 (KEDD…PPHS), 318-344 (TSPDGALKSSPPPSQGNHTSPPIQHPA), and 410-467 (SLSS…LPSA). Acidic residues-rich tracts occupy residues 215-225 (EDDEEIDLESI) and 233-244 (NDGEQSNEEEDE). Basic and acidic residues predominate over residues 245 to 262 (KLEHLRQGEKESLKKESE). The segment covering 415 to 431 (KTPERTSPKHSDRENVP) has biased composition (basic and acidic residues). Residues 447–460 (RENTLSQQEGTSRI) show a composition bias toward polar residues.

It belongs to the TALE/IRO homeobox family. In terms of tissue distribution, expressed early in neural differentiation in the neural plate, and expression continues in the neural tube after neural fold closure. Expressed in the presumptive midbrain territory. Also expressed in the prospective neural crest and the preplacodal field, anterior to the neural plate. Strongly expressed in the profundal placode and weakly expressed in the trigeminal placode. Also expressed in the mesoderm in the Spemann organizer from the start of gastrulation, and subsequently in its derivatives; namely in the notochord as well as in the somites of stage 25 embryos, and the somites and notochord of tailbud embryos. Also expressed in specific and overlapping dynamic patterns with irx2 and irx3 during pronephric kidney development. Renal expression begins in the dorsal region of the pronephric anlage at mid neurula stage and continues to at least tailbud stages where expression is confined to the intermediate tubule segment IT1. Renal expression is maintained at tadpole stages.

Its subcellular location is the nucleus. Acts partially redundantly with other irx members in neural patterning. Required for formation of the posterior forebrain, midbrain, hindbrain, and to a lesser extent, spinal cord. Acts early in neural plate development to induce expression of some but not all proneural genes, and specify a neural precursor state. Also up-regulates repressors that prevent neuronal differentiation. Patterns the neuroectoderm in both the anterior/posterior and dorsal/ventral axes. Acts primarily as a transcriptional repressor during neural development, and binds to the bmp4 promoter to repress gene expression and thus mediate down-regulation of bmp4 by wnt signaling. Controls multiple processes through bmp4-repression including neural plate development, neural crest specification and Spemann organizer development. Involved in the specification of the preplacodal field at the anterior border of the neural plate. Regulates the genetic cascade of interactions that are necessary for positioning the isthmus organizer and the formation of the midbrain-hindbrain boundary. Required during at least two stages of pronephros kidney development; during neurula stages, maintains transcription of key renal genes to define the size and identity of the pronephric anlage, probably in part through regulation of bmp-signaling. Subsequently required for proper formation of the intermediate tubule segment of the pronephros. Acts principally as a transcriptional activator during pronephros development. The sequence is that of Iroquois-class homeodomain protein irx-1-A (irx1-a) from Xenopus laevis (African clawed frog).